The chain runs to 360 residues: MKPSIVAKLEALQERYEEIQALLAEADVIASQERFRALSKEYAQLTDITSCYRQWRKVQDDMEAAEMMLDDPEMKEMAQEELKEAQSVNEELEQQLQVLLLPKDPDDEFNCFLEIRAGTGGDEAALFAGDLFRMYSRYAEARRWRIEVMNANEGEHGGYKEIIAKVIGDGAYGVLKFESGGHRVQRVPETESQGRIHTSACTVAVLPEVPEAELPEISPSDLRIDTFRSSGAGGQHVNTTDSAIRITHIPTGIVVECQDERSQHKNKAKAMSVLGARIRAAEVQKRQEAEASERRNLLGSGDRSDRIRTYNFPQGRVTDHRINLTLYRLDEVMEGKLDALIQPIVTEYQADQLSALSEQD.

Gln-235 is subject to N5-methylglutamine. Residues 285-305 form a disordered region; that stretch reads KRQEAEASERRNLLGSGDRSD.

It belongs to the prokaryotic/mitochondrial release factor family. Methylated by PrmC. Methylation increases the termination efficiency of RF1.

It localises to the cytoplasm. Functionally, peptide chain release factor 1 directs the termination of translation in response to the peptide chain termination codons UAG and UAA. The chain is Peptide chain release factor 1 from Proteus mirabilis (strain HI4320).